Reading from the N-terminus, the 320-residue chain is Cytochrome f (320 aa).

The N-terminal stretch at 1 to 35 (MQTRNTFFWIKEQMTRSISVSIIVYVITQTSISNA) is a signal peptide. Positions 36, 56, 59, and 60 each coordinate heme. The chain crosses the membrane as a helical span at residues 286–306 (VQGLLFFFASVILAQIFLVLK).

This sequence belongs to the cytochrome f family. As to quaternary structure, the 4 large subunits of the cytochrome b6-f complex are cytochrome b6, subunit IV (17 kDa polypeptide, petD), cytochrome f and the Rieske protein, while the 4 small subunits are PetG, PetL, PetM and PetN. The complex functions as a dimer. Heme is required as a cofactor.

The protein resides in the plastid. The protein localises to the chloroplast thylakoid membrane. Component of the cytochrome b6-f complex, which mediates electron transfer between photosystem II (PSII) and photosystem I (PSI), cyclic electron flow around PSI, and state transitions. This chain is Cytochrome f, found in Buxus microphylla (Littleleaf boxwood).